Reading from the N-terminus, the 406-residue chain is Zinc metalloprotease Rip1 (406 aa).

A helical transmembrane segment spans residues 1 to 21; it reads MMFGIGIVLFALAILVSVALH. Zn(2+) is bound at residue histidine 21. Glutamate 22 is a catalytic residue. Histidine 25 contributes to the Zn(2+) binding site. The helical transmembrane segment at 108–128 threads the bilayer; the sequence is PAMNFVIGLVLIYGIAIVWGL. A PDZ domain is found at 125–209; the sequence is VWGLPNLHQP…RIEFKRDGRV (85 aa). Residue aspartate 206 coordinates Zn(2+). 2 helical membrane-spanning segments follow: residues 327 to 349 and 375 to 395; these read NFVL…IAVA and LMPA…LTVT.

This sequence belongs to the peptidase M50B family. Zn(2+) serves as cofactor.

It is found in the cell membrane. Proteolysis is inhibited by Wag31; when Wag31 is non-functional oxidative stress increases proteolysis. In terms of biological role, a probable intramembrane site-2 protease (S2P) that cleaves type-2 transmembrane proteins within their membrane-spanning domains. Degrades PbpB (PBP3, FtsI) under conditions of oxidatives stress; degradation is inhibited by Wag31-PbpB interaction. Also cleaves anti-sigma factors RskA, RslA and RslM. Site-1 proteases have not yet been identified in this organism. Its function is as follows. Regulated intramembrane proteolysis (RIP) occurs when an extracytoplasmic signal (possibly oxidative stress) triggers a concerted proteolytic cascade to transmit information and elicit cellular responses. The membrane-spanning regulatory substrate protein (includes anti-sigma factors RskA, RslA, RsmA, and PbpB) is first cut extracytoplasmically (site-1 protease, S1P), then within the membrane itself (site-2 protease, S2P, this entry), while cytoplasmic proteases finish degrading the regulatory protein, liberating the effector protein (ECF sigma factors SigK, SigL and SigM). This is Zinc metalloprotease Rip1 (rip1) from Mycolicibacterium smegmatis (strain ATCC 700084 / mc(2)155) (Mycobacterium smegmatis).